The sequence spans 290 residues: Porphobilinogen deaminase (290 aa).

At Cys237 the chain carries S-(dipyrrolylmethanemethyl)cysteine.

The protein belongs to the HMBS family. In terms of assembly, monomer. Dipyrromethane is required as a cofactor.

The enzyme catalyses 4 porphobilinogen + H2O = hydroxymethylbilane + 4 NH4(+). It functions in the pathway porphyrin-containing compound metabolism; protoporphyrin-IX biosynthesis; coproporphyrinogen-III from 5-aminolevulinate: step 2/4. Its function is as follows. Tetrapolymerization of the monopyrrole PBG into the hydroxymethylbilane pre-uroporphyrinogen in several discrete steps. The protein is Porphobilinogen deaminase of Clostridium botulinum (strain Loch Maree / Type A3).